The chain runs to 1398 residues: DNA-directed RNA polymerase subunit beta' (1398 aa).

Zn(2+)-binding residues include Cys71, Cys73, Cys86, and Cys89. Mg(2+) contacts are provided by Asp462, Asp464, and Asp466. Positions 810, 884, 891, and 894 each coordinate Zn(2+).

Belongs to the RNA polymerase beta' chain family. As to quaternary structure, the RNAP catalytic core consists of 2 alpha, 1 beta, 1 beta' and 1 omega subunit. When a sigma factor is associated with the core the holoenzyme is formed, which can initiate transcription. Mg(2+) is required as a cofactor. Zn(2+) serves as cofactor.

It catalyses the reaction RNA(n) + a ribonucleoside 5'-triphosphate = RNA(n+1) + diphosphate. In terms of biological role, DNA-dependent RNA polymerase catalyzes the transcription of DNA into RNA using the four ribonucleoside triphosphates as substrates. The sequence is that of DNA-directed RNA polymerase subunit beta' from Mesorhizobium japonicum (strain LMG 29417 / CECT 9101 / MAFF 303099) (Mesorhizobium loti (strain MAFF 303099)).